The following is a 92-amino-acid chain: Small ribosomal subunit protein uS19 (92 aa).

It belongs to the universal ribosomal protein uS19 family.

Functionally, protein S19 forms a complex with S13 that binds strongly to the 16S ribosomal RNA. This is Small ribosomal subunit protein uS19 from Phenylobacterium zucineum (strain HLK1).